Consider the following 145-residue polypeptide: 3-hydroxyacyl-[acyl-carrier-protein] dehydratase FabZ (145 aa).

His-49 is an active-site residue.

This sequence belongs to the thioester dehydratase family. FabZ subfamily.

The protein resides in the cytoplasm. It carries out the reaction a (3R)-hydroxyacyl-[ACP] = a (2E)-enoyl-[ACP] + H2O. Functionally, involved in unsaturated fatty acids biosynthesis. Catalyzes the dehydration of short chain beta-hydroxyacyl-ACPs and long chain saturated and unsaturated beta-hydroxyacyl-ACPs. The protein is 3-hydroxyacyl-[acyl-carrier-protein] dehydratase FabZ of Anaplasma phagocytophilum (strain HZ).